The primary structure comprises 325 residues: MHPAFSVIFLTTLLGAGQGLYLAMVTGQLYAVARFLPAQADQFYAVGSLVALLLLIAGLGASFFHLGRPERAWRAAAMWRTSWLSREVIVLPIVMALVFAYGVAHWFEWTQPLFQVGAALQVDLTLLLGVLGTIASLALFVCTAMIYAAVRFLQEWHTPLTVSNFLFLGAASGFMLAAAYSAYIGNPLVTFYGTWAVILTLVGLASRLAHLRRNARLKHKSTVQTAIGVRHASVVQKAQGATGGSFNTREFFHGRSQSLLERLRTVYLVLVFPIPVLLIGLSYLIGSSNLPIIAFFVQFAGLLIERWSFFAEARHPQNLYYQSVA.

The next 8 helical transmembrane spans lie at 5 to 25 (FSVI…LAMV), 43 to 63 (FYAV…GASF), 87 to 107 (EVIV…AHWF), 126 to 146 (LLLG…TAMI), 165 to 185 (FLFL…AYIG), 186 to 206 (NPLV…GLAS), 266 to 286 (VYLV…YLIG), and 290 to 310 (LPII…WSFF).

This sequence belongs to the DmsC family. As to quaternary structure, forms a heterotrimeric membrane-bound complex composed of a catalytic heterodimer (SoeAB) and a membrane anchor protein (SoeC).

It localises to the cell inner membrane. In terms of biological role, part of the SoeABC complex that catalyzes the oxidation of sulfite to sulfate. SoeC probably anchors and stabilizes the catalytic subunits. This chain is Sulfite dehydrogenase subunit C, found in Allochromatium vinosum (strain ATCC 17899 / DSM 180 / NBRC 103801 / NCIMB 10441 / D) (Chromatium vinosum).